We begin with the raw amino-acid sequence, 148 residues long: Deoxyuridine 5'-triphosphate nucleotidohydrolase (148 aa).

Substrate is bound by residues Arg-67–Gly-69, Asn-80, Leu-84–Asp-86, and Met-94.

This sequence belongs to the dUTPase family. It depends on Mg(2+) as a cofactor.

It catalyses the reaction dUTP + H2O = dUMP + diphosphate + H(+). It participates in pyrimidine metabolism; dUMP biosynthesis; dUMP from dCTP (dUTP route): step 2/2. This enzyme is involved in nucleotide metabolism: it produces dUMP, the immediate precursor of thymidine nucleotides and it decreases the intracellular concentration of dUTP so that uracil cannot be incorporated into DNA. The polypeptide is Deoxyuridine 5'-triphosphate nucleotidohydrolase (Paraburkholderia phytofirmans (strain DSM 17436 / LMG 22146 / PsJN) (Burkholderia phytofirmans)).